Consider the following 360-residue polypeptide: Peptide chain release factor 1 (360 aa).

An N5-methylglutamine modification is found at Gln235. A disordered region spans residues 284–313 (AKRQQAEASTRRNLLGSGDRSDRNRTYNFP).

It belongs to the prokaryotic/mitochondrial release factor family. In terms of processing, methylated by PrmC. Methylation increases the termination efficiency of RF1.

The protein localises to the cytoplasm. Its function is as follows. Peptide chain release factor 1 directs the termination of translation in response to the peptide chain termination codons UAG and UAA. The protein is Peptide chain release factor 1 of Salmonella agona (strain SL483).